A 1128-amino-acid chain; its full sequence is Apoptosis-stimulating of p53 protein 2 (1128 aa).

The disordered stretch occupies residues 85–120 (PPNRDIVSGPRSQDPSVKRNGVKVPGEHRRKENGVN). The interaction with APPBP1 stretch occupies residues 332 to 348 (NLPQQAVSAPSRVAAVG). The segment at 393–436 (MRSGAASQSKGSKAHPASPDWNPSNADLLPSQGSSVPQSAGTAL) is disordered. Over residues 413-433 (WNPSNADLLPSQGSSVPQSAG) the composition is skewed to polar residues. 5 positions are modified to phosphoserine: serine 479, serine 555, serine 568, serine 571, and serine 575. Disordered stretches follow at residues 549–596 (QARM…FPPA) and 654–705 (NPQQ…LPFL). A compositionally biased stretch (polar residues) spans 562 to 574 (GQDQVLSPASKQE). Positions 654-669 (NPQQHPENIYSCSQGK) are enriched in polar residues. Over residues 684 to 693 (HESHENERIP) the composition is skewed to basic and acidic residues. Residues serine 697, serine 713, and serine 736 each carry the phosphoserine modification. Disordered stretches follow at residues 723-748 (KLSN…GPNI), 802-824 (SLVP…SDVP), and 870-907 (PPPP…KRTN). The short motif at 866-875 (YPPYPPPPYP) is the SH3-binding element. Residues 876–1128 (SGEPEVSEED…RIKPRQRSLA (253 aa)) form a mediates interaction with APC2 region. ANK repeat units follow at residues 958 to 987 (EGIT…NVNA) and 991 to 1020 (DGWT…AVFA). The SH3 domain occupies 1057 to 1119 (MNKGVIYALW…PRNLLGLYPR (63 aa)).

It belongs to the ASPP family. In terms of assembly, interacts with P53/TP53; the interaction promotes pro-apoptotic activity. Interacts with BCL2. Interacts with protein phosphatase 1. Interacts with RELA NF-kappa-B subunit. This interaction probably prevents the activation of apoptosis, possibly by preventing its interaction with p53/TP53. Interacts with APC2 and APPBP1. Interacts with DDX42 (via the C-terminus); the interaction is not inhibited by TP53BP2 ubiquitination and is independent of p53/TP53.

It localises to the cytoplasm. The protein localises to the perinuclear region. Its subcellular location is the nucleus. Regulator that plays a central role in regulation of apoptosis and cell growth via its interactions with proteins such as TP53. Regulates p53/TP53 by enhancing the DNA binding and transactivation function of p53/TP53 on the promoters of proapoptotic genes in vivo. Inhibits the ability of APPBP1 to conjugate NEDD8 to CUL1, and thereby decreases APPBP1 ability to induce apoptosis. Impedes cell cycle progression at G2/M. Its apoptosis-stimulating activity is inhibited by its interaction with DDX42. The polypeptide is Apoptosis-stimulating of p53 protein 2 (Tp53bp2) (Mus musculus (Mouse)).